The chain runs to 942 residues: tRNAse Z TRZ4, mitochondrial (942 aa).

A mitochondrion-targeting transit peptide spans 1–50 (MLTSSMPQNLSLFGFSPLKSSSFALILRPFSLYPPIFASSSPAPSRRPPR). Residues 38-85 (ASSSPAPSRRPPRTAGYRRSGPSPPRRKWSSFEEQKRKGRSPMEKDKA) are disordered. The span at 67–85 (SSFEEQKRKGRSPMEKDKA) shows a compositional bias: basic and acidic residues.

This sequence belongs to the RNase Z family. Homodimer. Zn(2+) is required as a cofactor. Ca(2+) serves as cofactor. The cofactor is Mn(2+). Requires Mg(2+) as cofactor.

The protein localises to the mitochondrion. It catalyses the reaction Endonucleolytic cleavage of RNA, removing extra 3' nucleotides from tRNA precursor, generating 3' termini of tRNAs. A 3'-hydroxy group is left at the tRNA terminus and a 5'-phosphoryl group is left at the trailer molecule.. Zinc phosphodiesterase, which displays tRNA 3'-processing endonuclease activity. Involved in tRNA maturation, by removing a 3'-trailer from precursor tRNA. Can process the mitochondrial tRNA-like structures (t-elements). The polypeptide is tRNAse Z TRZ4, mitochondrial (Arabidopsis thaliana (Mouse-ear cress)).